A 78-amino-acid polypeptide reads, in one-letter code: Large ribosomal subunit protein bL28 (78 aa).

Belongs to the bacterial ribosomal protein bL28 family.

The polypeptide is Large ribosomal subunit protein bL28 (Acinetobacter baylyi (strain ATCC 33305 / BD413 / ADP1)).